The chain runs to 860 residues: Eukaryotic translation initiation factor 3 subunit C (860 aa).

Positions 1-76 (MSRFFYGNDS…SEESEEEDVV (76 aa)) are disordered. The span at 10 to 51 (SDSDSSGSDEEELYSDEEVEQSEEESSEEDASSEEESSEDED) shows a compositional bias: acidic residues. The PCI domain occupies 599-773 (FHMHINLELL…DAIVFRKGVE (175 aa)). Residues 812–860 (RDQGAGARGGRGPRGGGQARGGPRLPGGQQRRPGGQQFGGGALGGAIKA) are disordered. A compositionally biased stretch (gly residues) spans 817-831 (GARGGRGPRGGGQAR). Low complexity predominate over residues 832 to 846 (GGPRLPGGQQRRPGG). Gly residues predominate over residues 847 to 860 (QQFGGGALGGAIKA).

The protein belongs to the eIF-3 subunit C family. In terms of assembly, component of the eukaryotic translation initiation factor 3 (eIF-3) complex.

The protein resides in the cytoplasm. Component of the eukaryotic translation initiation factor 3 (eIF-3) complex, which is involved in protein synthesis of a specialized repertoire of mRNAs and, together with other initiation factors, stimulates binding of mRNA and methionyl-tRNAi to the 40S ribosome. The eIF-3 complex specifically targets and initiates translation of a subset of mRNAs involved in cell proliferation. In Emericella nidulans (strain FGSC A4 / ATCC 38163 / CBS 112.46 / NRRL 194 / M139) (Aspergillus nidulans), this protein is Eukaryotic translation initiation factor 3 subunit C (nip1).